A 713-amino-acid polypeptide reads, in one-letter code: uncharacterized protein (713 aa).

Residues 686 to 706 traverse the membrane as a helical segment; the sequence is VWKFNPALYSTITNIFLLIIF.

This sequence belongs to the plectrovirus ORF1 family.

Its subcellular location is the host membrane. This is an uncharacterized protein from Spiroplasma melliferum (SpV1).